The following is a 549-amino-acid chain: Lysine-specific demethylase JMJ31 (549 aa).

Positions 125-296 (DYRPGQIYLA…SNMPEHMDSY (172 aa)) constitute a JmjC domain. 3 residues coordinate Fe cation: His-184, Asp-186, and His-266.

Belongs to the JARID1 histone demethylase family. Fe(2+) serves as cofactor. In terms of tissue distribution, mostly expressed in leaves and inflorescences, and, to a lower extent, in roots, siliques and stems.

It is found in the nucleus. Functionally, may function as histone H3 lysine demethylase and be involved in regulation of gene expression. This Arabidopsis thaliana (Mouse-ear cress) protein is Lysine-specific demethylase JMJ31.